A 199-amino-acid polypeptide reads, in one-letter code: dCTP deaminase, dUMP-forming (199 aa).

DCTP is bound by residues 101–106, D119, 127–129, Q148, Y162, and Q174; these read KSSLGR and TLE. The active-site Proton donor/acceptor is the E129. A disordered region spans residues 163–199; sequence GSAAAGSKYQGQRGPTPSRSYLNFPLPSDAVDAVESR. The span at 171-183 shows a compositional bias: polar residues; it reads YQGQRGPTPSRSY.

This sequence belongs to the dCTP deaminase family. In terms of assembly, homotrimer.

The enzyme catalyses dCTP + 2 H2O = dUMP + NH4(+) + diphosphate. It functions in the pathway pyrimidine metabolism; dUMP biosynthesis; dUMP from dCTP: step 1/1. In terms of biological role, bifunctional enzyme that catalyzes both the deamination of dCTP to dUTP and the hydrolysis of dUTP to dUMP without releasing the toxic dUTP intermediate. In Nocardia farcinica (strain IFM 10152), this protein is dCTP deaminase, dUMP-forming.